Here is a 145-residue protein sequence, read N- to C-terminus: Phosphoribosyl-AMP cyclohydrolase (145 aa).

Mg(2+) is bound at residue aspartate 87. Cysteine 88 is a Zn(2+) binding site. Mg(2+) contacts are provided by aspartate 89 and aspartate 91. Residues cysteine 104 and cysteine 111 each coordinate Zn(2+).

The protein belongs to the PRA-CH family. In terms of assembly, homodimer. Mg(2+) is required as a cofactor. Zn(2+) serves as cofactor.

Its subcellular location is the cytoplasm. It catalyses the reaction 1-(5-phospho-beta-D-ribosyl)-5'-AMP + H2O = 1-(5-phospho-beta-D-ribosyl)-5-[(5-phospho-beta-D-ribosylamino)methylideneamino]imidazole-4-carboxamide. It participates in amino-acid biosynthesis; L-histidine biosynthesis; L-histidine from 5-phospho-alpha-D-ribose 1-diphosphate: step 3/9. Catalyzes the hydrolysis of the adenine ring of phosphoribosyl-AMP. The chain is Phosphoribosyl-AMP cyclohydrolase from Nitrobacter winogradskyi (strain ATCC 25391 / DSM 10237 / CIP 104748 / NCIMB 11846 / Nb-255).